The following is a 149-amino-acid chain: Mediator of RNA polymerase II transcription subunit 9 (149 aa).

Positions 18–64 (TNPTLDKPNAEATKEEFSSAENRDEKDYLTNQQPKNLSTPSTSSNGE) are disordered. Basic and acidic residues predominate over residues 25 to 45 (PNAEATKEEFSSAENRDEKDY). Residues 46–63 (LTNQQPKNLSTPSTSSNG) show a composition bias toward polar residues. 2 short sequence motifs (nuclear localization signal) span residues 77-99 (RKDPNNLSNQLETLTGSIRHRLK) and 136-149 (KRDVLDDLYRKLQR).

This sequence belongs to the Mediator complex subunit 9 family. Component of the Mediator complex, which is composed of at least 21 subunits that form three structurally distinct submodules. The Mediator head module contains MED6, MED8, MED11, SRB4/MED17, SRB5/MED18, ROX3/MED19, SRB2/MED20 and SRB6/MED22, the middle module contains MED1, MED4, NUT1/MED5, MED7, CSE2/MED9, NUT2/MED10, SRB7/MED21 and SOH1/MED31, and the tail module contains MED2, PGD1/MED3, RGR1/MED14, GAL11/MED15 and SIN4/MED16. The head and the middle modules interact directly with RNA polymerase II, whereas the elongated tail module interacts with gene-specific regulatory proteins. CSE2/MED9 interacts directly with MED4.

Its subcellular location is the nucleus. Its function is as follows. Component of the Mediator complex, a coactivator involved in the regulated transcription of nearly all RNA polymerase II-dependent genes. Mediator functions as a bridge to convey information from gene-specific regulatory proteins to the basal RNA polymerase II transcription machinery. The Mediator complex, having a compact conformation in its free form, is recruited to promoters by direct interactions with regulatory proteins and serves for the assembly of a functional preinitiation complex with RNA polymerase II and the general transcription factors. The Mediator complex unfolds to an extended conformation and partially surrounds RNA polymerase II, specifically interacting with the unphosphorylated form of the C-terminal domain (CTD) of RNA polymerase II. The Mediator complex dissociates from the RNA polymerase II holoenzyme and stays at the promoter when transcriptional elongation begins. This chain is Mediator of RNA polymerase II transcription subunit 9 (CSE2), found in Saccharomyces cerevisiae (strain ATCC 204508 / S288c) (Baker's yeast).